Here is a 336-residue protein sequence, read N- to C-terminus: Dihydroorotate dehydrogenase (quinone) (336 aa).

FMN contacts are provided by residues 62–66 (AGLDK) and Thr-86. Lys-66 contacts substrate. 111–115 (NRMGF) lines the substrate pocket. FMN is bound by residues Asn-139 and Asn-172. Position 172 (Asn-172) interacts with substrate. The active-site Nucleophile is Ser-175. Asn-177 is a binding site for substrate. Residues Lys-217 and Thr-245 each contribute to the FMN site. A substrate-binding site is contributed by 246-247 (NT). FMN contacts are provided by residues Gly-268, Gly-297, and 318–319 (YS).

It belongs to the dihydroorotate dehydrogenase family. Type 2 subfamily. In terms of assembly, monomer. FMN is required as a cofactor.

Its subcellular location is the cell membrane. The enzyme catalyses (S)-dihydroorotate + a quinone = orotate + a quinol. The protein operates within pyrimidine metabolism; UMP biosynthesis via de novo pathway; orotate from (S)-dihydroorotate (quinone route): step 1/1. Its function is as follows. Catalyzes the conversion of dihydroorotate to orotate with quinone as electron acceptor. The polypeptide is Dihydroorotate dehydrogenase (quinone) (Psychromonas ingrahamii (strain DSM 17664 / CCUG 51855 / 37)).